We begin with the raw amino-acid sequence, 240 residues long: MDRYGEKQQQQQMFASYVDASLLAASGEVQGERPRARRRRRRGARCVGGGGGGGEVDGGDPKKRRLSDEQVEMLELSFREERKLETGRKVHLASELGLDPKQVAVWFQNRRARHKSKLLEEEFSKLKHAHDAAILHKCHLENEVLRLKERLVVAEEEVRRLRSAAGSHTASGEGGDIMGLGGSGACVAGSPSSSFSTGTCQPPSFGGGDHLGDDDLVYVPEYGGYADNSVVEWFSLYGLI.

Residues serine 26–arginine 64 form a disordered region. Basic residues predominate over residues arginine 35–alanine 44. The segment covering cysteine 46–valine 56 has biased composition (gly residues). Residues glycine 59–leucine 118 constitute a DNA-binding region (homeobox). The stretch at glutamine 108–serine 167 forms a coiled coil.

The protein belongs to the HD-ZIP homeobox family. Class I subfamily. As to expression, expressed in roots, stems, leaf blades and panicles.

The protein localises to the nucleus. Probable transcription factor. In Oryza sativa subsp. japonica (Rice), this protein is Homeobox-leucine zipper protein HOX14 (HOX14).